Consider the following 167-residue polypeptide: Peptide deformylase (167 aa).

The Fe cation site is built by Cys-90 and His-132. Residue Glu-133 is part of the active site. His-136 provides a ligand contact to Fe cation.

The protein belongs to the polypeptide deformylase family. Requires Fe(2+) as cofactor.

The catalysed reaction is N-terminal N-formyl-L-methionyl-[peptide] + H2O = N-terminal L-methionyl-[peptide] + formate. Its function is as follows. Removes the formyl group from the N-terminal Met of newly synthesized proteins. Requires at least a dipeptide for an efficient rate of reaction. N-terminal L-methionine is a prerequisite for activity but the enzyme has broad specificity at other positions. The polypeptide is Peptide deformylase (Dehalococcoides mccartyi (strain ATCC BAA-2100 / JCM 16839 / KCTC 5957 / BAV1)).